The chain runs to 91 residues: ATP synthase subunit c (91 aa).

2 helical membrane passes run 4-24 (FTMC…GTGI) and 53-73 (IGLA…LIIL).

This sequence belongs to the ATPase C chain family. As to quaternary structure, F-type ATPases have 2 components, F(1) - the catalytic core - and F(0) - the membrane proton channel. F(1) has five subunits: alpha(3), beta(3), gamma(1), delta(1), epsilon(1). F(0) has three main subunits: a(1), b(2) and c(10-14). The alpha and beta chains form an alternating ring which encloses part of the gamma chain. F(1) is attached to F(0) by a central stalk formed by the gamma and epsilon chains, while a peripheral stalk is formed by the delta and b chains.

The protein resides in the cell inner membrane. F(1)F(0) ATP synthase produces ATP from ADP in the presence of a proton or sodium gradient. F-type ATPases consist of two structural domains, F(1) containing the extramembraneous catalytic core and F(0) containing the membrane proton channel, linked together by a central stalk and a peripheral stalk. During catalysis, ATP synthesis in the catalytic domain of F(1) is coupled via a rotary mechanism of the central stalk subunits to proton translocation. Its function is as follows. Key component of the F(0) channel; it plays a direct role in translocation across the membrane. A homomeric c-ring of between 10-14 subunits forms the central stalk rotor element with the F(1) delta and epsilon subunits. The sequence is that of ATP synthase subunit c from Geobacter sulfurreducens (strain ATCC 51573 / DSM 12127 / PCA).